We begin with the raw amino-acid sequence, 708 residues long: Ion-translocating oxidoreductase complex subunit C (708 aa).

4Fe-4S ferredoxin-type domains follow at residues 369 to 397 (GEPQ…QQLY) and 407 to 436 (KATT…VQYF). [4Fe-4S] cluster is bound by residues Cys377, Cys380, Cys383, Cys387, Cys416, Cys419, Cys422, and Cys426. The disordered stretch occupies residues 630 to 682 (AKARKLEQQQANAEPEEQIDPRKAAVEAAIARAKARKLEQQQANAEPEEQIDP).

This sequence belongs to the 4Fe4S bacterial-type ferredoxin family. RnfC subfamily. In terms of assembly, the complex is composed of six subunits: RsxA, RsxB, RsxC, RsxD, RsxE and RsxG. The cofactor is [4Fe-4S] cluster.

It localises to the cell inner membrane. In terms of biological role, part of a membrane-bound complex that couples electron transfer with translocation of ions across the membrane. Required to maintain the reduced state of SoxR. The polypeptide is Ion-translocating oxidoreductase complex subunit C (Escherichia coli (strain UTI89 / UPEC)).